We begin with the raw amino-acid sequence, 251 residues long: Triosephosphate isomerase (251 aa).

A substrate-binding site is contributed by 9–11; that stretch reads NWK. His-95 (electrophile) is an active-site residue. Glu-167 serves as the catalytic Proton acceptor. Residues Gly-173, Ser-213, and 234 to 235 contribute to the substrate site; that span reads GG. Position 213 is a phosphoserine (Ser-213).

It belongs to the triosephosphate isomerase family. As to quaternary structure, homodimer.

The protein resides in the cytoplasm. It carries out the reaction D-glyceraldehyde 3-phosphate = dihydroxyacetone phosphate. It functions in the pathway carbohydrate biosynthesis; gluconeogenesis. Its pathway is carbohydrate degradation; glycolysis; D-glyceraldehyde 3-phosphate from glycerone phosphate: step 1/1. Functionally, involved in the gluconeogenesis. Catalyzes stereospecifically the conversion of dihydroxyacetone phosphate (DHAP) to D-glyceraldehyde-3-phosphate (G3P). The sequence is that of Triosephosphate isomerase from Anoxybacillus flavithermus (strain DSM 21510 / WK1).